The primary structure comprises 432 residues: Glutamyl-tRNA reductase (432 aa).

Substrate-binding positions include 49–52 (TCNR), Ser-101, 106–108 (EPQ), and Gln-112. Cys-50 (nucleophile) is an active-site residue. 181–186 (GAGETI) lines the NADP(+) pocket. Residues 407-432 (FPEKPGYQHPPIATPIVRTDDADPAP) are disordered.

It belongs to the glutamyl-tRNA reductase family. As to quaternary structure, homodimer.

It carries out the reaction (S)-4-amino-5-oxopentanoate + tRNA(Glu) + NADP(+) = L-glutamyl-tRNA(Glu) + NADPH + H(+). It functions in the pathway porphyrin-containing compound metabolism; protoporphyrin-IX biosynthesis; 5-aminolevulinate from L-glutamyl-tRNA(Glu): step 1/2. Functionally, catalyzes the NADPH-dependent reduction of glutamyl-tRNA(Glu) to glutamate 1-semialdehyde (GSA). This Xanthomonas oryzae pv. oryzae (strain PXO99A) protein is Glutamyl-tRNA reductase.